The following is a 254-amino-acid chain: Bidirectional sugar transporter SWEET6b (254 aa).

The Extracellular segment spans residues 1 to 9 (MISPDAARN). A helical membrane pass occupies residues 10–30 (VVGIIGNVISFGLFLAPVPTF). The 89-residue stretch at 10–98 (VVGIIGNVIS…IFFLYSPNKK (89 aa)) folds into the MtN3/slv 1 domain. Over 31 to 45 (WRICKRKDVEEFKAD) the chain is Cytoplasmic. The helical transmembrane segment at 46-66 (PYLATLLNCMLWVFYGIPIVH) threads the bilayer. Over 67-69 (PNS) the chain is Extracellular. A helical transmembrane segment spans residues 70-90 (ILVVTINGIGLVVEGTYLFIF). The Cytoplasmic portion of the chain corresponds to 91-101 (FLYSPNKKRLR). Residues 102 to 122 (MLAVLGVELVFMLAVILGVLL) form a helical membrane-spanning segment. Residues 123 to 131 (GAHTHKKRS) lie on the Extracellular side of the membrane. Residues 132–152 (MIVGILCVFFGSIMYFSPLTI) form a helical membrane-spanning segment. The 84-residue stretch at 133 to 216 (IVGILCVFFG…LILYACYYRT (84 aa)) folds into the MtN3/slv 2 domain. Residues 153 to 165 (MGKVIKTKSVEYM) are Cytoplasmic-facing. The helical transmembrane segment at 166 to 186 (PFFLSLVCFLNGVCWTAYALI) threads the bilayer. The Extracellular segment spans residues 187-189 (RFD). The helical transmembrane segment at 190-210 (IYVTIPNSLGAIFGAIQLILY) threads the bilayer. Residues 211 to 254 (ACYYRTTPKKTKAAKDVEMPSVISGPGAAATASGGSVVSVTVER) are Cytoplasmic-facing.

The protein belongs to the SWEET sugar transporter family. Forms homooligomers and/or heterooligomers.

It is found in the cell membrane. Functionally, mediates both low-affinity uptake and efflux of sugar across the plasma membrane. In Oryza sativa subsp. indica (Rice), this protein is Bidirectional sugar transporter SWEET6b (SWEET6B).